The sequence spans 235 residues: Serine protease SplA (235 aa).

The N-terminal stretch at 1–35 is a signal peptide; it reads MNKNVMVKGLTALDILTSLGCAENISDQPHSIAKA. Active-site charge relay system residues include histidine 74, aspartate 113, and serine 189.

Belongs to the peptidase S1B family.

Its subcellular location is the secreted. This chain is Serine protease SplA (splA), found in Staphylococcus aureus.